Reading from the N-terminus, the 151-residue chain is MVKHLQDHIQFLEQFINNVNALTAKMLKDLQNEYEISLEQSNVLGMLNKEPLTISEITQRQGVNKAAVSRRIKKLIDAKLVKLDKPNLNIDQRLKFITLTDKGRAYLKERNAIMTDIAQDITNDLNSEDIENVRQVLEVINHRIKTYSNHK.

Residues 1-142 (MVKHLQDHIQ…VRQVLEVINH (142 aa)) form the HTH marR-type domain. The segment at residues 54-77 (ISEITQRQGVNKAAVSRRIKKLID) is a DNA-binding region (H-T-H motif).

In terms of biological role, involved in the antibiotic teicoplanin susceptibility. Inactivation of the tcaRAB operon leads to teicoplanin resistance. Is a weak negative regulator of transcription of the icaABD operon. This Staphylococcus aureus (strain COL) protein is HTH-type transcriptional regulator TcaR (tcaR).